The chain runs to 276 residues: NADPH-dependent 7-cyano-7-deazaguanine reductase (276 aa).

83-85 (IES) contacts substrate. 85 to 86 (SK) contacts NADPH. Catalysis depends on Cys184, which acts as the Thioimide intermediate. Asp191 serves as the catalytic Proton donor. 223 to 224 (HE) lines the substrate pocket. Residue 252–253 (RG) participates in NADPH binding.

This sequence belongs to the GTP cyclohydrolase I family. QueF type 2 subfamily. Homodimer.

It is found in the cytoplasm. It catalyses the reaction 7-aminomethyl-7-carbaguanine + 2 NADP(+) = 7-cyano-7-deazaguanine + 2 NADPH + 3 H(+). Its pathway is tRNA modification; tRNA-queuosine biosynthesis. Functionally, catalyzes the NADPH-dependent reduction of 7-cyano-7-deazaguanine (preQ0) to 7-aminomethyl-7-deazaguanine (preQ1). The sequence is that of NADPH-dependent 7-cyano-7-deazaguanine reductase from Pseudomonas savastanoi pv. phaseolicola (strain 1448A / Race 6) (Pseudomonas syringae pv. phaseolicola (strain 1448A / Race 6)).